Here is a 68-residue protein sequence, read N- to C-terminus: MKTQFVILIVAVVLLQLISHSEAFLGALWNVAKSVFGKRGLRNFDDLDDTFEPEMSEADLKYLQDLLR.

The signal sequence occupies residues 1 to 23 (MKTQFVILIVAVVLLQLISHSEA). Phenylalanine amide is present on Phe36. A propeptide spanning residues 40 to 68 (GLRNFDDLDDTFEPEMSEADLKYLQDLLR) is cleaved from the precursor.

The protein belongs to the non-disulfide-bridged peptide (NDBP) superfamily. Short antimicrobial peptide (group 4) family. As to expression, expressed by the venom gland.

It localises to the secreted. Its subcellular location is the target cell membrane. Its function is as follows. Cationic amphipathic peptide with antibacterial activities against both Gram-positive and Gram-negative bacteria. Also shows antifungal activities. Is mildly hemolytic against human erythrocytes. In addition, when tested in vitro on the parasite Trypanosoma cruzi (responsible of the Chagas disease), is able to reduce the number of the three forms (epimastigote, trypomastigote and amastigote). Also shows antiplasmodial and cytotoxic activity (tested on Plasmodium gallinaceum, and MCF-7 breast cancer cell line). The sequence is that of Amphipathic peptide VmCT1 from Vaejovis mexicanus smithi (Mexican scorpion).